Here is a 524-residue protein sequence, read N- to C-terminus: Metal transporter Nramp2 (524 aa).

The disordered stretch occupies residues Ala-34–Gly-58. 12 helical membrane passes run Leu-70–Leu-90, Ala-98–Val-118, Leu-155–Leu-175, Thr-179–Leu-199, Leu-207–Gly-227, Ala-253–Val-273, Ile-295–Phe-315, Tyr-341–Gln-361, Ala-389–Thr-409, Ala-420–Val-440, Val-457–Phe-477, and Leu-486–Ile-506.

Belongs to the NRAMP (TC 2.A.55) family.

Its subcellular location is the membrane. Its function is as follows. Probable metal transporter. This Oryza sativa subsp. japonica (Rice) protein is Metal transporter Nramp2 (NRAMP2).